The sequence spans 592 residues: MRTHYCGNLNKSLAGQTVELCGWVNRRRDLGGLIFIDMRDREGVVQVVVDPDMKDIFPIANQLRNEFCIKFTGEVRVRPDSQVNKDMATGEVELYATGLEIINRSEALPLDFNQTNSEEQRLKYRYIDLRRPEMSDRIKLRARASSFVRRFLDENLFLDIETPVLTKATPEGARDYLVPSRVHKGSFYALPQSPQLFKQLLMMSGFDRYYQIVKCFRDEDLRADRQPEFTQIDIETSFLTSQEVRNVTEKLVHDMWKELLDVELGQFPVMPFSEAIRRFGSDKPDLRNPLELVDVADLVKDVEFKVFSGPANDEKGRVAVIRVPGGAKLTRKQIDGYAEHVNIYGAKGLAWMKVNDRAAGMEGIQSPVAKFLSEDVINGILDRTQAESGDIILFGADKAGIVAEAMGALRLKLGTDLELTDTSAWAPLWVVDFPMFEEDGEGNLHAMHHPFTSPLGVNAEELKANPAAANSDAYDMVINGYEVGGGSVRIHSAEMQTAVFGILGIEAKEQQEKFGFLLEALKYGTPPHAGLAFGLDRLAMLLCGTENIRDVIAFPKTTAAACLLTDAPSLANPASLEELAIAVKLAEKKEQA.

Glutamate 171 serves as a coordination point for L-aspartate. Residues 195 to 198 (QLFK) form an aspartate region. Residue arginine 217 coordinates L-aspartate. Residues 217 to 219 (RDE) and glutamine 226 contribute to the ATP site. Position 448 (histidine 448) interacts with L-aspartate. Glutamate 482 contacts ATP. Arginine 489 contributes to the L-aspartate binding site. Position 534-537 (534-537 (GLDR)) interacts with ATP.

The protein belongs to the class-II aminoacyl-tRNA synthetase family. Type 1 subfamily. Homodimer.

The protein resides in the cytoplasm. It catalyses the reaction tRNA(Asp) + L-aspartate + ATP = L-aspartyl-tRNA(Asp) + AMP + diphosphate. In terms of biological role, catalyzes the attachment of L-aspartate to tRNA(Asp) in a two-step reaction: L-aspartate is first activated by ATP to form Asp-AMP and then transferred to the acceptor end of tRNA(Asp). The protein is Aspartate--tRNA ligase of Vibrio atlanticus (strain LGP32) (Vibrio splendidus (strain Mel32)).